Here is a 165-residue protein sequence, read N- to C-terminus: SsrA-binding protein (165 aa).

Positions 141–165 (KLHDKRQEEKRKQADREVKSALARY) are disordered. Basic and acidic residues predominate over residues 145–159 (KRQEEKRKQADREVK).

This sequence belongs to the SmpB family.

The protein localises to the cytoplasm. Functionally, required for rescue of stalled ribosomes mediated by trans-translation. Binds to transfer-messenger RNA (tmRNA), required for stable association of tmRNA with ribosomes. tmRNA and SmpB together mimic tRNA shape, replacing the anticodon stem-loop with SmpB. tmRNA is encoded by the ssrA gene; the 2 termini fold to resemble tRNA(Ala) and it encodes a 'tag peptide', a short internal open reading frame. During trans-translation Ala-aminoacylated tmRNA acts like a tRNA, entering the A-site of stalled ribosomes, displacing the stalled mRNA. The ribosome then switches to translate the ORF on the tmRNA; the nascent peptide is terminated with the 'tag peptide' encoded by the tmRNA and targeted for degradation. The ribosome is freed to recommence translation, which seems to be the essential function of trans-translation. In Prochlorococcus marinus (strain MIT 9303), this protein is SsrA-binding protein.